A 187-amino-acid chain; its full sequence is PsbQ-like protein 3, chloroplastic (187 aa).

A chloroplast-targeting transit peptide spans 1-32 (MAISKPPPLHFTFFHNQDSSIDTSDSNLALSI). The transit peptide at 33-60 (DTSRRRRDVLLTISGTLIPQLFFFDRKR) directs the protein to the thylakoid.

The protein belongs to the PsbQ family. In terms of assembly, subunit of the lumenal protuberance of the NDH complex.

The protein resides in the plastid. The protein localises to the chloroplast thylakoid membrane. Required for both formation and activity of the chloroplast NAD(P)H dehydrogenase (NDH) complex. The protein is PsbQ-like protein 3, chloroplastic (PQL3) of Arabidopsis thaliana (Mouse-ear cress).